A 370-amino-acid chain; its full sequence is DNA replication and repair protein RecF (370 aa).

30-37 (GDNGSGKT) lines the ATP pocket.

The protein belongs to the RecF family.

The protein localises to the cytoplasm. In terms of biological role, the RecF protein is involved in DNA metabolism; it is required for DNA replication and normal SOS inducibility. RecF binds preferentially to single-stranded, linear DNA. It also seems to bind ATP. The polypeptide is DNA replication and repair protein RecF (Stutzerimonas stutzeri (strain A1501) (Pseudomonas stutzeri)).